The primary structure comprises 274 residues: Large ribosomal subunit protein uL2cz/uL2cy (274 aa).

Disordered regions lie at residues 1-24 and 223-274; these read MAIH…QVKS and MNPV…RRSK. Residues 7–24 show a composition bias toward polar residues; it reads KTSTPSTRNGTVDSQVKS.

It belongs to the universal ribosomal protein uL2 family. In terms of assembly, part of the 50S ribosomal subunit.

The protein localises to the plastid. It is found in the chloroplast. This is Large ribosomal subunit protein uL2cz/uL2cy (rpl2-A) from Nicotiana sylvestris (Wood tobacco).